The following is a 207-amino-acid chain: Glycerol-3-phosphate acyltransferase (207 aa).

Transmembrane regions (helical) follow at residues 7-27, 58-78, 83-103, 116-136, 141-161, and 166-186; these read YALA…LVIV, LATF…FTLL, VGFV…WLGF, LAFV…LGLF, ISSL…WLMG, and LILA…RENI.

Belongs to the PlsY family. In terms of assembly, probably interacts with PlsX.

It localises to the cell inner membrane. The catalysed reaction is an acyl phosphate + sn-glycerol 3-phosphate = a 1-acyl-sn-glycero-3-phosphate + phosphate. Its pathway is lipid metabolism; phospholipid metabolism. Functionally, catalyzes the transfer of an acyl group from acyl-phosphate (acyl-PO(4)) to glycerol-3-phosphate (G3P) to form lysophosphatidic acid (LPA). This enzyme utilizes acyl-phosphate as fatty acyl donor, but not acyl-CoA or acyl-ACP. This is Glycerol-3-phosphate acyltransferase from Hyphomonas neptunium (strain ATCC 15444).